The chain runs to 440 residues: Ankyrin repeat and MYND domain-containing protein 2 (440 aa).

ANK repeat units follow at residues 45-74, 79-108, and 159-188; these read NGMT…DASC, HGYT…ETDV, and KLAG…NPLL. Residues cysteine 320, cysteine 323, cysteine 332, cysteine 335, cysteine 341, cysteine 345, histidine 353, and cysteine 357 each coordinate Zn(2+). The MYND-type zinc finger occupies 320–357; it reads CTTCGEKGASKRCSVCKMVIYCDQTCQKTHWFAHKKMC. A compositionally biased stretch (basic and acidic residues) spans 371–381; it reads AAKHKRQEEKN. Residues 371–440 form a disordered region; sequence AAKHKRQEEK…APTGPQLSEE (70 aa).

As to quaternary structure, interacts with the retinal-specific guanylyl cyclase GC1.

It localises to the cell projection. Its subcellular location is the cilium. Its function is as follows. May be involved in the trafficking of signaling proteins to the cilia. This chain is Ankyrin repeat and MYND domain-containing protein 2 (Ankmy2), found in Mus musculus (Mouse).